The sequence spans 142 residues: Alpha-lactalbumin (142 aa).

A signal peptide spans 1-19 (MMSFVSLLLVGILFHATQA). In terms of domain architecture, C-type lysozyme spans 20 to 142 (EQLTKCEVFQ…KLDQWLCEKL (123 aa)). 4 disulfide bridges follow: Cys25–Cys139, Cys47–Cys130, Cys80–Cys96, and Cys92–Cys110. Asn64 and Asn93 each carry an N-linked (GlcNAc...) asparagine glycan. Ca(2+) is bound by residues Lys98, Asp101, Asp103, Asp106, and Asp107.

Belongs to the glycosyl hydrolase 22 family. Lactose synthase (LS) is a heterodimer of a catalytic component, beta1,4-galactosyltransferase (beta4Gal-T1) and a regulatory component, alpha-lactalbumin (LA). As to expression, mammary gland specific. Secreted in milk.

The protein localises to the secreted. Its function is as follows. Regulatory subunit of lactose synthase, changes the substrate specificity of galactosyltransferase in the mammary gland making glucose a good acceptor substrate for this enzyme. This enables LS to synthesize lactose, the major carbohydrate component of milk. In other tissues, galactosyltransferase transfers galactose onto the N-acetylglucosamine of the oligosaccharide chains in glycoproteins. The sequence is that of Alpha-lactalbumin (LALBA) from Ovis aries (Sheep).